The primary structure comprises 314 residues: Formimidoylglutamase (314 aa).

6 residues coordinate Mn(2+): His127, Asp153, His155, Asp157, Asp245, and Asp247.

This sequence belongs to the arginase family. Requires Mn(2+) as cofactor.

The enzyme catalyses N-formimidoyl-L-glutamate + H2O = formamide + L-glutamate. Its pathway is amino-acid degradation; L-histidine degradation into L-glutamate; L-glutamate from N-formimidoyl-L-glutamate (hydrolase route): step 1/1. Catalyzes the conversion of N-formimidoyl-L-glutamate to L-glutamate and formamide. The chain is Formimidoylglutamase from Aeromonas hydrophila subsp. hydrophila (strain ATCC 7966 / DSM 30187 / BCRC 13018 / CCUG 14551 / JCM 1027 / KCTC 2358 / NCIMB 9240 / NCTC 8049).